Here is a 240-residue protein sequence, read N- to C-terminus: Citrate synthase-lysine N-methyltransferase CSKMT, mitochondrial (240 aa).

The transit peptide at 1 to 28 (MAALRRMLHLPSLMMGTCRPFAGSLADS) directs the protein to the mitochondrion.

This sequence belongs to the methyltransferase superfamily.

The protein resides in the mitochondrion. The enzyme catalyses L-lysyl-[citrate synthase] + S-adenosyl-L-methionine = N(6)-methyl-L-lysyl-[citrate synthase] + S-adenosyl-L-homocysteine + H(+). It catalyses the reaction N(6)-methyl-L-lysyl-[citrate synthase] + S-adenosyl-L-methionine = N(6),N(6)-dimethyl-L-lysyl-[citrate synthase] + S-adenosyl-L-homocysteine + H(+). The catalysed reaction is N(6),N(6)-dimethyl-L-lysyl-[citrate synthase] + S-adenosyl-L-methionine = N(6),N(6),N(6)-trimethyl-L-lysyl-[citrate synthase] + S-adenosyl-L-homocysteine + H(+). Citrate synthase-lysine methyltransferase activity is inhibited by S-adenosylhomocysteine (AdoHcy) and oxaloacetate (OAA). Functionally, protein-lysine methyltransferase that selectively trimethylates citrate synthase (CS) in mitochondria. Seems to conduct trimethylation in a highly distributive manner rather than in a processive manner, and thus introduces a single methyl group per binding event. The polypeptide is Citrate synthase-lysine N-methyltransferase CSKMT, mitochondrial (Homo sapiens (Human)).